Reading from the N-terminus, the 486-residue chain is NVGYITQIIGPVLDVAFSPGEMPNIYNSLVVKGQNPAGQDINVTCEVQQLLGNNEVRAVATSATDGLMRGMGAVDTGAPLSVPVGETTLGRISNVLGEPVDNPGPVQSNTTFPIHRSAPAFTQLDTKLSTFETGIKVVDLLAPYRRGGKIGLFGGAGVGKTVPITELINNIAKAHGGVSVSGGVGERTREGNDLYMEMKESKVINEQNISESKVALVYGQMNEPPGARMRVGSTASTMAEYFRDVNKQDVPLFIDNILRFVQAGSEVSALLGRMPSAVGYQPTLGTEMGSLQERITSTKEGSITSIQAVYVPADDLTDPAPATTSAHLDATTVLSRGLAAKGIYPAVDPLDSTSTMSQPWIVGEEHYETAQGVKQTSQRYKELQDIIAILGLDELSEEDRLTVARARKIERFSSQPFLVAEVFTGSPGKYVSLPETIKGFQMILPGELDNLPEQASYLAGNVDEATAKAAALQVEGQRKGWYRIFA.

Residue 154 to 161 participates in ATP binding; that stretch reads GGAGVGKT.

Belongs to the ATPase alpha/beta chains family. F-type ATPases have 2 components, CF(1) - the catalytic core - and CF(0) - the membrane proton channel. CF(1) has five subunits: alpha(3), beta(3), gamma(1), delta(1), epsilon(1). CF(0) has four main subunits: a(1), b(1), b'(1) and c(9-12).

It is found in the plastid. It localises to the chloroplast thylakoid membrane. It carries out the reaction ATP + H2O + 4 H(+)(in) = ADP + phosphate + 5 H(+)(out). Functionally, produces ATP from ADP in the presence of a proton gradient across the membrane. The catalytic sites are hosted primarily by the beta subunits. The polypeptide is ATP synthase subunit beta, chloroplastic (Dennstaedtia punctilobula (Hay-scented fern)).